Reading from the N-terminus, the 160-residue chain is Phosphopantetheine adenylyltransferase (160 aa).

Ser9 is a binding site for substrate. Residues 9-10 and His17 each bind ATP; that span reads SL. Residues Lys41, Leu74, and Lys88 each coordinate substrate. ATP is bound by residues 89–91, Glu99, and 123–129; these read GIR and YLHLSST.

This sequence belongs to the bacterial CoaD family. Homohexamer. Mg(2+) serves as cofactor.

The protein localises to the cytoplasm. The catalysed reaction is (R)-4'-phosphopantetheine + ATP + H(+) = 3'-dephospho-CoA + diphosphate. It functions in the pathway cofactor biosynthesis; coenzyme A biosynthesis; CoA from (R)-pantothenate: step 4/5. Functionally, reversibly transfers an adenylyl group from ATP to 4'-phosphopantetheine, yielding dephospho-CoA (dPCoA) and pyrophosphate. This is Phosphopantetheine adenylyltransferase from Renibacterium salmoninarum (strain ATCC 33209 / DSM 20767 / JCM 11484 / NBRC 15589 / NCIMB 2235).